The primary structure comprises 580 residues: Protein O-linked-mannose beta-1,4-N-acetylglucosaminyltransferase 2 (580 aa).

At 1 to 4 (MHLS) the chain is on the cytoplasmic side. Residues 5–25 (AVLNALLVSVLAAVLWKHVRL) form a helical; Signal-anchor for type II membrane protein membrane-spanning segment. Over 26–580 (REHAAALEEE…PFADVLVCNT (555 aa)) the chain is Lumenal. N-linked (GlcNAc...) asparagine glycans are attached at residues N99 and N276. A Fibronectin type-III domain is found at 488 to 580 (ARCQASVQGA…PFADVLVCNT (93 aa)).

The protein belongs to the glycosyltransferase 61 family.

It is found in the endoplasmic reticulum membrane. The enzyme catalyses 3-O-(alpha-D-mannosyl)-L-threonyl-[protein] + UDP-N-acetyl-alpha-D-glucosamine = 3-O-(N-acetyl-beta-D-glucosaminyl-(1-&gt;4)-alpha-D-mannosyl)-L-threonyl-[protein] + UDP + H(+). It functions in the pathway protein modification; protein glycosylation. Its function is as follows. O-linked mannose beta-1,4-N-acetylglucosaminyltransferase that transfers UDP-N-acetyl-D-glucosamine to the 4-position of the mannose to generate N-acetyl-D-glucosamine-beta-1,4-O-D-mannosylprotein. Involved in the biosynthesis of the phosphorylated O-mannosyl trisaccharide (N-acetylgalactosamine-beta-3-N-acetylglucosamine-beta-4-(phosphate-6-)mannose), a carbohydrate structure present in alpha-dystroglycan (DAG1), which is required for binding laminin G-like domain-containing extracellular proteins with high affinity. In Canis lupus familiaris (Dog), this protein is Protein O-linked-mannose beta-1,4-N-acetylglucosaminyltransferase 2 (POMGNT2).